Here is a 103-residue protein sequence, read N- to C-terminus: Cyanovirin-N homolog (103 aa).

This sequence belongs to the cyanovirin-N family.

Its function is as follows. Mannose-binding lectin. This is Cyanovirin-N homolog from Tuber borchii (White truffle).